Consider the following 119-residue polypeptide: MSYINKKGKTTSWRLMVIRQQVSEVIANNQITTTLTKAKETRKHVDRIITLAKKNTLASRRAAAAILLDTSISTKDQLIQKLFTDLQKKYTSRNGGYTRILKLGRRKGDNVEEAILQLV.

Belongs to the bacterial ribosomal protein bL17 family. Part of the 50S ribosomal subunit. Contacts protein L32.

This is Large ribosomal subunit protein bL17 from Malacoplasma penetrans (strain HF-2) (Mycoplasma penetrans).